Reading from the N-terminus, the 177-residue chain is Novel acetylcholine receptor chaperone (177 aa).

Residues 1 to 5 (MASPR) lie on the Cytoplasmic side of the membrane. Residues 6-26 (TVTVVALSVALGLFFVFMGTI) form a helical membrane-spanning segment. Residues 27–61 (KLTPRLSKDAYSEMKRAYKSYVRALPLLKKMGINS) are Lumenal-facing. The tract at residues 43–54 (AYKSYVRALPLL) is interaction with NGFR. A helical membrane pass occupies residues 62 to 82 (ILLRKSIGALEVACGIVMTLV). Residues 83-88 (PGRPKD) lie on the Cytoplasmic side of the membrane. Residues 89–109 (VANFFLLLLVLAVLFFHQLVG) traverse the membrane as a helical segment. At 110 to 114 (DPLKR) the chain is on the lumenal side. Residues 115-132 (YAHALVFGILLTCRLLIA) traverse the membrane as a helical segment. Over 133 to 177 (RKPEDRSSEKKSSPPGNAGSDGNAGNTEEQPSLYEKAPQGKMKLS) the chain is Cytoplasmic. Positions 136–177 (EDRSSEKKSSPPGNAGSDGNAGNTEEQPSLYEKAPQGKMKLS) are disordered.

The protein belongs to the DoxX family. In terms of assembly, may interact with NGFR. Interacts with RPN1, RPN2 and CANX.

Its subcellular location is the peroxisome membrane. The protein localises to the cytoplasmic vesicle. It is found in the endoplasmic reticulum membrane. Functionally, molecular chaperone which mediates the proper assembly and functional expression of the nicotinic acetylcholine receptors (nAChRs) throughout the brain. Essential for the proper folding, assembly, function and surface trafficking of alpha-7 (CHRNA7), alpha-4-beta-2, alpha-3-beta-2 and alpha-3-beta-4 receptors. Stably associates with ribophorin-1 (RPN1) and ribophorin-2 (RPN2) (components of the oligosaccharyl transferase (OST) complex) and with calnexin (CANX), both of which are critical for NACHO-mediated effects on CHRNA7 assembly and function. Facilitates the proper folding and assembly of alpha-6-beta-2 and alpha-6-beta-2-beta-3 receptors and acts at early stages of the nAChRs subunit assembly. Promotes the expression of the alpha-4(2):beta-2(3) stoichiometric form over the alpha-4(3):beta-2(2) form. This Bos taurus (Bovine) protein is Novel acetylcholine receptor chaperone (TMEM35A).